The chain runs to 75 residues: ATP synthase subunit c (75 aa).

A run of 2 helical transmembrane segments spans residues 13–33 and 54–74; these read LNVV…GILI and MFLG…LAFI.

The protein belongs to the ATPase C chain family. As to quaternary structure, F-type ATPases have 2 components, F(1) - the catalytic core - and F(0) - the membrane proton channel. F(1) has five subunits: alpha(3), beta(3), gamma(1), delta(1), epsilon(1). F(0) has three main subunits: a(1), b(2) and c(10-14). The alpha and beta chains form an alternating ring which encloses part of the gamma chain. F(1) is attached to F(0) by a central stalk formed by the gamma and epsilon chains, while a peripheral stalk is formed by the delta and b chains.

The protein resides in the cell membrane. F(1)F(0) ATP synthase produces ATP from ADP in the presence of a proton or sodium gradient. F-type ATPases consist of two structural domains, F(1) containing the extramembraneous catalytic core and F(0) containing the membrane proton channel, linked together by a central stalk and a peripheral stalk. During catalysis, ATP synthesis in the catalytic domain of F(1) is coupled via a rotary mechanism of the central stalk subunits to proton translocation. Functionally, key component of the F(0) channel; it plays a direct role in translocation across the membrane. A homomeric c-ring of between 10-14 subunits forms the central stalk rotor element with the F(1) delta and epsilon subunits. This is ATP synthase subunit c from Bifidobacterium adolescentis (strain ATCC 15703 / DSM 20083 / NCTC 11814 / E194a).